The following is a 294-amino-acid chain: NAD kinase (294 aa).

Residue aspartate 74 is the Proton acceptor of the active site. NAD(+)-binding positions include 74–75 (DG), 148–149 (NE), histidine 159, arginine 176, aspartate 178, 189–194 (TAYSLS), and glutamine 249.

This sequence belongs to the NAD kinase family. A divalent metal cation serves as cofactor.

The protein resides in the cytoplasm. It carries out the reaction NAD(+) + ATP = ADP + NADP(+) + H(+). Involved in the regulation of the intracellular balance of NAD and NADP, and is a key enzyme in the biosynthesis of NADP. Catalyzes specifically the phosphorylation on 2'-hydroxyl of the adenosine moiety of NAD to yield NADP. In Vibrio atlanticus (strain LGP32) (Vibrio splendidus (strain Mel32)), this protein is NAD kinase.